A 265-amino-acid polypeptide reads, in one-letter code: Gamma-secretase subunit APH-1A (265 aa).

Topologically, residues 1–2 (MG) are lumenal. Residues 3 to 23 (AAVFFGCTFVAFGPAFALFLI) form a helical membrane-spanning segment. At 24–31 (TVAGDPLR) the chain is on the cytoplasmic side. The helical transmembrane segment at 32-52 (VIILVAGAFFWLVSLLLASVV) threads the bilayer. The Lumenal portion of the chain corresponds to 53–68 (WFILVHVTDRSDARLQ). A helical transmembrane segment spans residues 69–89 (YGLLIFGAAVSVLLQEVFRFA). Topologically, residues 90–118 (YYKLLKKADEGLASLSEDGRSPISIRQMA) are cytoplasmic. Residues 119–139 (YVSGLSFGIISGVFSVINILA) form a helical membrane-spanning segment. Residues 140–158 (DALGPGVVGIHGDSPYYFL) are Lumenal-facing. A helical membrane pass occupies residues 159–179 (TSAFLTAAIILLHTFWGVVFF). Residues 180–186 (DACERRR) are Cytoplasmic-facing. A helical membrane pass occupies residues 187-207 (YWALGLVVGSHLLTSGLTFLN). Residues 208–213 (PWYEAS) lie on the Lumenal side of the membrane. Residues 214 to 234 (LLPIYAVTVSMGLWAFITAGG) traverse the membrane as a helical segment. The Cytoplasmic segment spans residues 235–265 (SLRSIQRSLLCRRQEDSRVMVYSALRIPPED).

The protein belongs to the APH-1 family. As to quaternary structure, the functional gamma-secretase complex is composed of at least four polypeptides: a presenilin homodimer (PSEN1 or PSEN2), nicastrin (NCSTN), APH1 (APH1A or APH1B) and PSENEN/PEN2. Widely expressed. Expressed in leukocytes, lung, placenta, small intestine, liver, kidney, spleen thymus, skeletal muscle, heart and brain. Isoform 1 and isoform 2 are nearly expressed at the same level.

It is found in the endoplasmic reticulum membrane. Its subcellular location is the golgi apparatus. The protein resides in the golgi stack membrane. Non-catalytic subunit of the gamma-secretase complex, an endoprotease complex that catalyzes the intramembrane cleavage of integral membrane proteins such as Notch receptors and APP (amyloid-beta precursor protein). Required for normal gamma-secretase assembly. The gamma-secretase complex plays a role in Notch and Wnt signaling cascades and regulation of downstream processes via its role in processing key regulatory proteins, and by regulating cytosolic CTNNB1 levels. The polypeptide is Gamma-secretase subunit APH-1A (APH1A) (Homo sapiens (Human)).